The sequence spans 435 residues: 5-methylthioadenosine/S-adenosylhomocysteine deaminase (435 aa).

Residues H65 and H67 each contribute to the Zn(2+) site. Substrate contacts are provided by E94, R150, and H189. Zn(2+) is bound at residue H216. Substrate is bound by residues E219 and D304. Residue D304 coordinates Zn(2+).

The protein belongs to the metallo-dependent hydrolases superfamily. MTA/SAH deaminase family. Zn(2+) serves as cofactor.

The enzyme catalyses S-adenosyl-L-homocysteine + H2O + H(+) = S-inosyl-L-homocysteine + NH4(+). The catalysed reaction is S-methyl-5'-thioadenosine + H2O + H(+) = S-methyl-5'-thioinosine + NH4(+). Catalyzes the deamination of 5-methylthioadenosine and S-adenosyl-L-homocysteine into 5-methylthioinosine and S-inosyl-L-homocysteine, respectively. Is also able to deaminate adenosine. In Bacillus cereus (strain ZK / E33L), this protein is 5-methylthioadenosine/S-adenosylhomocysteine deaminase.